A 519-amino-acid polypeptide reads, in one-letter code: Light-independent protochlorophyllide reductase subunit B (519 aa).

D36 lines the [4Fe-4S] cluster pocket. The active-site Proton donor is D274. 409–410 contributes to the substrate binding site; it reads GL. The tract at residues 426 to 465 is disordered; that stretch reads DEAGPSHHGGHSPKPSEAARTPDKVEERADPAPEAPQTGS. The span at 445-456 shows a compositional bias: basic and acidic residues; the sequence is RTPDKVEERADP.

Belongs to the ChlB/BchB/BchZ family. In terms of assembly, protochlorophyllide reductase is composed of three subunits; BchL, BchN and BchB. Forms a heterotetramer of two BchB and two BchN subunits. It depends on [4Fe-4S] cluster as a cofactor.

It carries out the reaction chlorophyllide a + oxidized 2[4Fe-4S]-[ferredoxin] + 2 ADP + 2 phosphate = protochlorophyllide a + reduced 2[4Fe-4S]-[ferredoxin] + 2 ATP + 2 H2O. The protein operates within porphyrin-containing compound metabolism; bacteriochlorophyll biosynthesis (light-independent). In terms of biological role, component of the dark-operative protochlorophyllide reductase (DPOR) that uses Mg-ATP and reduced ferredoxin to reduce ring D of protochlorophyllide (Pchlide) to form chlorophyllide a (Chlide). This reaction is light-independent. The NB-protein (BchN-BchB) is the catalytic component of the complex. The chain is Light-independent protochlorophyllide reductase subunit B from Jannaschia sp. (strain CCS1).